The chain runs to 342 residues: MSVEHSPVDPSAEPPEKAEEAALRPGALAEFGGQQRVADQLGLVLAASKSRGTTPDHVLLSGPPGLGKTTLAMIIASEMSAPIRISSGPAIQHAGDLAAILSSLVPGEVFFLDEIHRMSKPAEEMLYLAMEDFRVDVVVGKGPGATAIPIEIPPFTLVGATTRAGLLPGPLRDRFGFTAQLDYYEVADLERIVTRSAGVIGVELAEGAAHTIASRSRGTPRIANRLLRRVRDWADVHHESPVTPQGAETALDLYEVDPLGLDRLDRAVLHAVCLKFGGGPVGLSTLAISVGEEPQTVEEVAEPFLVRLGFLMRTPRGRVPTDRAWRHLGLEPPPDSSGEGLF.

Positions 1–21 (MSVEHSPVDPSAEPPEKAEEA) are disordered. Positions 1–184 (MSVEHSPVDP…FGFTAQLDYY (184 aa)) are large ATPase domain (RuvB-L). ATP-binding positions include L23, R24, G65, K68, T69, T70, 131-133 (EDF), R174, Y184, and R221. Mg(2+) is bound at residue T69. Residues 185-255 (EVADLERIVT…GAETALDLYE (71 aa)) are small ATPAse domain (RuvB-S). The interval 258–342 (PLGLDRLDRA…PPDSSGEGLF (85 aa)) is head domain (RuvB-H). DNA contacts are provided by R313 and R318.

This sequence belongs to the RuvB family. In terms of assembly, homohexamer. Forms an RuvA(8)-RuvB(12)-Holliday junction (HJ) complex. HJ DNA is sandwiched between 2 RuvA tetramers; dsDNA enters through RuvA and exits via RuvB. An RuvB hexamer assembles on each DNA strand where it exits the tetramer. Each RuvB hexamer is contacted by two RuvA subunits (via domain III) on 2 adjacent RuvB subunits; this complex drives branch migration. In the full resolvosome a probable DNA-RuvA(4)-RuvB(12)-RuvC(2) complex forms which resolves the HJ.

The protein resides in the cytoplasm. It carries out the reaction ATP + H2O = ADP + phosphate + H(+). Its function is as follows. The RuvA-RuvB-RuvC complex processes Holliday junction (HJ) DNA during genetic recombination and DNA repair, while the RuvA-RuvB complex plays an important role in the rescue of blocked DNA replication forks via replication fork reversal (RFR). RuvA specifically binds to HJ cruciform DNA, conferring on it an open structure. The RuvB hexamer acts as an ATP-dependent pump, pulling dsDNA into and through the RuvAB complex. RuvB forms 2 homohexamers on either side of HJ DNA bound by 1 or 2 RuvA tetramers; 4 subunits per hexamer contact DNA at a time. Coordinated motions by a converter formed by DNA-disengaged RuvB subunits stimulates ATP hydrolysis and nucleotide exchange. Immobilization of the converter enables RuvB to convert the ATP-contained energy into a lever motion, pulling 2 nucleotides of DNA out of the RuvA tetramer per ATP hydrolyzed, thus driving DNA branch migration. The RuvB motors rotate together with the DNA substrate, which together with the progressing nucleotide cycle form the mechanistic basis for DNA recombination by continuous HJ branch migration. Branch migration allows RuvC to scan DNA until it finds its consensus sequence, where it cleaves and resolves cruciform DNA. This Cutibacterium acnes (strain DSM 16379 / KPA171202) (Propionibacterium acnes) protein is Holliday junction branch migration complex subunit RuvB.